A 274-amino-acid chain; its full sequence is MGTLSVNQNKLQKRLRRLAGEAVTDFNMIEEGDKVMVCLSGGKDSYTMLDVLLYLQKVAPIGFEIVAVNMDQKQPGFPEEVLPTYLKSIGVDYHIIEKDTYSVVKEKIPEGKTTCSLCSRLRRGTLYTFADRIGATKMALGHHRDDILETFFLNLFYGGTLKAMPPKLLSDDGRNVVIRPLAYCSETDIEAYAKLKEFPIIPCNLCGSQENLQRQVVKEMLREWERQSPGRTEIMFRALQNVHPSQLADRKLFDFAGLRIDDSAAPRFVDAVNL.

Positions 40–45 match the PP-loop motif motif; it reads SGGKDS. The [4Fe-4S] cluster site is built by cysteine 115, cysteine 118, and cysteine 206.

This sequence belongs to the TtcA family. In terms of assembly, homodimer. Mg(2+) serves as cofactor. [4Fe-4S] cluster is required as a cofactor.

The protein resides in the cytoplasm. It catalyses the reaction cytidine(32) in tRNA + S-sulfanyl-L-cysteinyl-[cysteine desulfurase] + AH2 + ATP = 2-thiocytidine(32) in tRNA + L-cysteinyl-[cysteine desulfurase] + A + AMP + diphosphate + H(+). It participates in tRNA modification. Functionally, catalyzes the ATP-dependent 2-thiolation of cytidine in position 32 of tRNA, to form 2-thiocytidine (s(2)C32). The sulfur atoms are provided by the cysteine/cysteine desulfurase (IscS) system. This is tRNA-cytidine(32) 2-sulfurtransferase from Azotobacter vinelandii (strain DJ / ATCC BAA-1303).